The primary structure comprises 660 residues: Chaperone protein DnaK (660 aa).

A Phosphothreonine; by autocatalysis modification is found at threonine 201. Positions 599 to 660 (EAMQAQSASA…ADVEIVDKPE (62 aa)) are disordered. Residues 600 to 617 (AMQAQSASAAASSAANAQ) show a composition bias toward low complexity.

It belongs to the heat shock protein 70 family.

In terms of biological role, acts as a chaperone. The sequence is that of Chaperone protein DnaK from Chlamydia trachomatis serovar A (strain ATCC VR-571B / DSM 19440 / HAR-13).